A 433-amino-acid polypeptide reads, in one-letter code: Phosphomethylpyrimidine synthase 1 (433 aa).

Residues M95, Y124, H163, 185-187 (SRG), 226-229 (NAMR), and E265 contribute to the substrate site. Residue H269 participates in Zn(2+) binding. Y292 contributes to the substrate binding site. H333 contributes to the Zn(2+) binding site. Residues C408, C411, and C415 each contribute to the [4Fe-4S] cluster site.

The protein belongs to the ThiC family. It depends on [4Fe-4S] cluster as a cofactor.

It catalyses the reaction 5-amino-1-(5-phospho-beta-D-ribosyl)imidazole + S-adenosyl-L-methionine = 4-amino-2-methyl-5-(phosphooxymethyl)pyrimidine + CO + 5'-deoxyadenosine + formate + L-methionine + 3 H(+). Its pathway is cofactor biosynthesis; thiamine diphosphate biosynthesis. Functionally, catalyzes the synthesis of the hydroxymethylpyrimidine phosphate (HMP-P) moiety of thiamine from aminoimidazole ribotide (AIR) in a radical S-adenosyl-L-methionine (SAM)-dependent reaction. The polypeptide is Phosphomethylpyrimidine synthase 1 (Methanothermobacter thermautotrophicus (strain ATCC 29096 / DSM 1053 / JCM 10044 / NBRC 100330 / Delta H) (Methanobacterium thermoautotrophicum)).